The chain runs to 210 residues: Ribosomal RNA large subunit methyltransferase E (210 aa).

S-adenosyl-L-methionine contacts are provided by G67, W69, D87, D103, and D128. K168 (proton acceptor) is an active-site residue.

This sequence belongs to the class I-like SAM-binding methyltransferase superfamily. RNA methyltransferase RlmE family.

It localises to the cytoplasm. It carries out the reaction uridine(2552) in 23S rRNA + S-adenosyl-L-methionine = 2'-O-methyluridine(2552) in 23S rRNA + S-adenosyl-L-homocysteine + H(+). In terms of biological role, specifically methylates the uridine in position 2552 of 23S rRNA at the 2'-O position of the ribose in the fully assembled 50S ribosomal subunit. This chain is Ribosomal RNA large subunit methyltransferase E, found in Psychrobacter cryohalolentis (strain ATCC BAA-1226 / DSM 17306 / VKM B-2378 / K5).